The sequence spans 95 residues: Protein TusB (95 aa).

It belongs to the DsrH/TusB family. Heterohexamer, formed by a dimer of trimers. The hexameric TusBCD complex contains 2 copies each of TusB, TusC and TusD. The TusBCD complex interacts with TusE.

It is found in the cytoplasm. In terms of biological role, part of a sulfur-relay system required for 2-thiolation of 5-methylaminomethyl-2-thiouridine (mnm(5)s(2)U) at tRNA wobble positions. The sequence is that of Protein TusB from Serratia proteamaculans (strain 568).